We begin with the raw amino-acid sequence, 313 residues long: 4-hydroxy-3-methylbut-2-enyl diphosphate reductase (313 aa).

Cys-14 is a binding site for [4Fe-4S] cluster. (2E)-4-hydroxy-3-methylbut-2-enyl diphosphate-binding residues include His-43 and His-76. Dimethylallyl diphosphate is bound by residues His-43 and His-76. Isopentenyl diphosphate is bound by residues His-43 and His-76. Residue Cys-98 participates in [4Fe-4S] cluster binding. His-126 is a binding site for (2E)-4-hydroxy-3-methylbut-2-enyl diphosphate. Residue His-126 coordinates dimethylallyl diphosphate. His-126 provides a ligand contact to isopentenyl diphosphate. The active-site Proton donor is the Glu-128. Residue Thr-166 coordinates (2E)-4-hydroxy-3-methylbut-2-enyl diphosphate. Cys-196 serves as a coordination point for [4Fe-4S] cluster. Residues Ser-224, Ser-225, Asn-226, and Ser-269 each contribute to the (2E)-4-hydroxy-3-methylbut-2-enyl diphosphate site. Residues Ser-224, Ser-225, Asn-226, and Ser-269 each contribute to the dimethylallyl diphosphate site. Positions 224, 225, 226, and 269 each coordinate isopentenyl diphosphate.

The protein belongs to the IspH family. Requires [4Fe-4S] cluster as cofactor.

It catalyses the reaction isopentenyl diphosphate + 2 oxidized [2Fe-2S]-[ferredoxin] + H2O = (2E)-4-hydroxy-3-methylbut-2-enyl diphosphate + 2 reduced [2Fe-2S]-[ferredoxin] + 2 H(+). The enzyme catalyses dimethylallyl diphosphate + 2 oxidized [2Fe-2S]-[ferredoxin] + H2O = (2E)-4-hydroxy-3-methylbut-2-enyl diphosphate + 2 reduced [2Fe-2S]-[ferredoxin] + 2 H(+). It functions in the pathway isoprenoid biosynthesis; dimethylallyl diphosphate biosynthesis; dimethylallyl diphosphate from (2E)-4-hydroxy-3-methylbutenyl diphosphate: step 1/1. The protein operates within isoprenoid biosynthesis; isopentenyl diphosphate biosynthesis via DXP pathway; isopentenyl diphosphate from 1-deoxy-D-xylulose 5-phosphate: step 6/6. In terms of biological role, catalyzes the conversion of 1-hydroxy-2-methyl-2-(E)-butenyl 4-diphosphate (HMBPP) into a mixture of isopentenyl diphosphate (IPP) and dimethylallyl diphosphate (DMAPP). Acts in the terminal step of the DOXP/MEP pathway for isoprenoid precursor biosynthesis. The chain is 4-hydroxy-3-methylbut-2-enyl diphosphate reductase from Tropheryma whipplei (strain TW08/27) (Whipple's bacillus).